Reading from the N-terminus, the 462-residue chain is DIMBOA UDP-glucosyltransferase BX9 (462 aa).

Catalysis depends on His-24, which acts as the Proton acceptor. His-24 contacts an anthocyanidin. Residue Asp-115 is the Charge relay of the active site. The UDP-alpha-D-glucose site is built by Thr-137, Ala-336, Gln-338, His-353, Trp-356, Asn-357, Ser-358, and Glu-361. Gly-376 lines the an anthocyanidin pocket. Asp-377 and Gln-378 together coordinate UDP-alpha-D-glucose.

Belongs to the UDP-glycosyltransferase family. It depends on Mg(2+) as a cofactor. The cofactor is Ca(2+). In terms of tissue distribution, expressed at the same levels in roots and shoots.

The enzyme catalyses DIMBOA + UDP-alpha-D-glucose = DIMBOA beta-D-glucoside + UDP + H(+). It carries out the reaction DIBOA + UDP-alpha-D-glucose = DIBOA beta-D-glucoside + UDP + H(+). Glucosyltransferase involved in the last step of benzoxazinoid glucoside biosynthesis. Catalyzes the glucosylation of hydroxamic acids utilizing UDP-glucose as glucose doner, reducing the toxicity of these natural insecticides for storage. Can use DIMBOA and DIBOA as substrates, HMBOA (2-hydroxy-7-methoxy-2H-1,4-benzoxazin-3(4H)-one) and HBOA (2-hydroxy-2H-1,4-benzoxazin-3(4H)-one) with a lower efficiency, but not indole acetic acid or quercitin. The chain is DIMBOA UDP-glucosyltransferase BX9 (BX9) from Zea mays (Maize).